The following is a 333-amino-acid chain: Malate dehydrogenase (333 aa).

Residues Gly10–Gly15 and Asp34 contribute to the NAD(+) site. Substrate contacts are provided by Arg83 and Arg89. NAD(+) is bound by residues Asn96 and Ile119–Asn121. The substrate site is built by Asn121 and Arg152. The active-site Proton acceptor is the His176.

The protein belongs to the LDH/MDH superfamily. MDH type 3 family.

The catalysed reaction is (S)-malate + NAD(+) = oxaloacetate + NADH + H(+). Functionally, catalyzes the reversible oxidation of malate to oxaloacetate. The chain is Malate dehydrogenase from Parvibaculum lavamentivorans (strain DS-1 / DSM 13023 / NCIMB 13966).